We begin with the raw amino-acid sequence, 137 residues long: MRHYEIVFLVHPDQSEQVPGMIERYTGILTQAGGQIHRLEDWGRRQLAYPIIELHKAHYVLMNVETTAESVEELETAFRFNDAVLRSMVMRTKAAITEASPMAKAKDERDTRRSSEERAPRAEATEEVKESAENTAE.

A disordered region spans residues 96–137; that stretch reads ITEASPMAKAKDERDTRRSSEERAPRAEATEEVKESAENTAE. The segment covering 104 to 137 has biased composition (basic and acidic residues); the sequence is KAKDERDTRRSSEERAPRAEATEEVKESAENTAE.

Belongs to the bacterial ribosomal protein bS6 family.

Functionally, binds together with bS18 to 16S ribosomal RNA. In Shewanella piezotolerans (strain WP3 / JCM 13877), this protein is Small ribosomal subunit protein bS6.